We begin with the raw amino-acid sequence, 419 residues long: eIF5-mimic protein 1 (419 aa).

The disordered stretch occupies residues 1-22 (MNKHQKPVLTGQRFKTRKRDEK). N6-acetyllysine is present on Lys117. The W2 domain maps to 248–415 (VQQSLGTRKE…QNAEEESESE (168 aa)). Phosphoserine occurs at positions 412 and 414.

It belongs to the BZW family. In terms of assembly, interacts with EIF3E. Interacts with EIF2S2. Interacts with EIF3C.

The protein localises to the cytoplasm. Translation initiation regulator which represses non-AUG initiated translation and repeat-associated non-AUG (RAN) initiated translation by acting as a competitive inhibitor of eukaryotic translation initiation factor 5 (EIF5) function. Increases the accuracy of translation initiation by impeding EIF5-dependent translation from non-AUG codons by competing with it for interaction with EIF2S2 within the 43S pre-initiation complex (PIC) in an EIF3C-binding dependent manner. The polypeptide is eIF5-mimic protein 1 (BZW2) (Homo sapiens (Human)).